The following is a 398-amino-acid chain: 1-deoxy-D-xylulose 5-phosphate reductoisomerase (398 aa).

Thr11, Gly12, Ser13, Ile14, and Asn125 together coordinate NADPH. Lys126 contacts 1-deoxy-D-xylulose 5-phosphate. NADPH is bound at residue Glu127. Residue Asp151 participates in Mn(2+) binding. 1-deoxy-D-xylulose 5-phosphate is bound by residues Ser152, Glu153, Ser186, and His209. Residue Glu153 coordinates Mn(2+). Gly215 contributes to the NADPH binding site. The 1-deoxy-D-xylulose 5-phosphate site is built by Ser222, Asn227, Lys228, and Glu231. Residue Glu231 participates in Mn(2+) binding.

It belongs to the DXR family. Mg(2+) is required as a cofactor. The cofactor is Mn(2+).

It catalyses the reaction 2-C-methyl-D-erythritol 4-phosphate + NADP(+) = 1-deoxy-D-xylulose 5-phosphate + NADPH + H(+). Its pathway is isoprenoid biosynthesis; isopentenyl diphosphate biosynthesis via DXP pathway; isopentenyl diphosphate from 1-deoxy-D-xylulose 5-phosphate: step 1/6. In terms of biological role, catalyzes the NADPH-dependent rearrangement and reduction of 1-deoxy-D-xylulose-5-phosphate (DXP) to 2-C-methyl-D-erythritol 4-phosphate (MEP). This Acinetobacter baylyi (strain ATCC 33305 / BD413 / ADP1) protein is 1-deoxy-D-xylulose 5-phosphate reductoisomerase.